The primary structure comprises 312 residues: HPr kinase/phosphorylase (312 aa).

Residues histidine 139 and lysine 160 contribute to the active site. 154–161 contacts ATP; the sequence is GDSGIGKS. Mg(2+) is bound at residue serine 161. Aspartate 178 (proton acceptor; for phosphorylation activity. Proton donor; for dephosphorylation activity) is an active-site residue. Residues 202-211 form an important for the catalytic mechanism of both phosphorylation and dephosphorylation region; the sequence is IEIRGVGIID. Mg(2+) is bound at residue glutamate 203. Arginine 244 is a catalytic residue. Residues 265–270 form an important for the catalytic mechanism of dephosphorylation region; sequence PVKTGR.

It belongs to the HPrK/P family. Homohexamer. It depends on Mg(2+) as a cofactor.

It carries out the reaction [HPr protein]-L-serine + ATP = [HPr protein]-O-phospho-L-serine + ADP + H(+). It catalyses the reaction [HPr protein]-O-phospho-L-serine + phosphate + H(+) = [HPr protein]-L-serine + diphosphate. Catalyzes the ATP- as well as the pyrophosphate-dependent phosphorylation of a specific serine residue in HPr, a phosphocarrier protein of the phosphoenolpyruvate-dependent sugar phosphotransferase system (PTS). HprK/P also catalyzes the pyrophosphate-producing, inorganic phosphate-dependent dephosphorylation (phosphorolysis) of seryl-phosphorylated HPr (P-Ser-HPr). The two antagonistic activities of HprK/P are regulated by several intracellular metabolites, which change their concentration in response to the absence or presence of rapidly metabolisable carbon sources (glucose, fructose, etc.) in the growth medium. Therefore, by controlling the phosphorylation state of HPr, HPrK/P is a sensor enzyme that plays a major role in the regulation of carbon metabolism and sugar transport: it mediates carbon catabolite repression (CCR), and regulates PTS-catalyzed carbohydrate uptake and inducer exclusion. The polypeptide is HPr kinase/phosphorylase (Streptococcus pneumoniae serotype 4 (strain ATCC BAA-334 / TIGR4)).